The chain runs to 350 residues: Anthranilate phosphoribosyltransferase (350 aa).

Residues glycine 94, 97–98 (GD), threonine 102, 104–107 (NIST), 122–130 (KHGNRSVSS), and serine 134 contribute to the 5-phospho-alpha-D-ribose 1-diphosphate site. Glycine 94 serves as a coordination point for anthranilate. Residue serine 106 participates in Mg(2+) binding. Asparagine 125 contacts anthranilate. Arginine 180 is an anthranilate binding site. Residues aspartate 239 and glutamate 240 each contribute to the Mg(2+) site.

The protein belongs to the anthranilate phosphoribosyltransferase family. As to quaternary structure, homodimer. It depends on Mg(2+) as a cofactor.

The enzyme catalyses N-(5-phospho-beta-D-ribosyl)anthranilate + diphosphate = 5-phospho-alpha-D-ribose 1-diphosphate + anthranilate. The protein operates within amino-acid biosynthesis; L-tryptophan biosynthesis; L-tryptophan from chorismate: step 2/5. Functionally, catalyzes the transfer of the phosphoribosyl group of 5-phosphorylribose-1-pyrophosphate (PRPP) to anthranilate to yield N-(5'-phosphoribosyl)-anthranilate (PRA). The sequence is that of Anthranilate phosphoribosyltransferase from Geotalea daltonii (strain DSM 22248 / JCM 15807 / FRC-32) (Geobacter daltonii).